We begin with the raw amino-acid sequence, 174 residues long: UPF0340 protein SAHV_2098 (174 aa).

This sequence belongs to the UPF0340 family.

This chain is UPF0340 protein SAHV_2098, found in Staphylococcus aureus (strain Mu3 / ATCC 700698).